Reading from the N-terminus, the 450-residue chain is Phosphoglucosamine mutase (450 aa).

Ser101 acts as the Phosphoserine intermediate in catalysis. Residues Ser101, Asp240, Asp242, and Asp244 each coordinate Mg(2+). A Phosphoserine modification is found at Ser101.

This sequence belongs to the phosphohexose mutase family. Mg(2+) serves as cofactor. In terms of processing, activated by phosphorylation.

The enzyme catalyses alpha-D-glucosamine 1-phosphate = D-glucosamine 6-phosphate. Catalyzes the conversion of glucosamine-6-phosphate to glucosamine-1-phosphate. The polypeptide is Phosphoglucosamine mutase (Streptococcus pneumoniae (strain JJA)).